A 574-amino-acid chain; its full sequence is Meiotically up-regulated gene 72 protein (574 aa).

Positions 339–374 are disordered; the sequence is VRAGTPQSSPNFNPAMRRSPVGAASRSPSRSTIGIS. Thr-343 carries the post-translational modification Phosphothreonine. The span at 364 to 374 shows a compositional bias: polar residues; the sequence is RSPSRSTIGIS. Phosphoserine is present on Ser-392. 2 disordered regions span residues 422 to 451 and 495 to 574; these read TSPSGLNPTGRPSRFGGRVRGNPLTMNKAG and RNRR…RRMD. Polar residues predominate over residues 541 to 554; it reads LYDTSRYPTRNSKP.

It is found in the cytoplasm. Its function is as follows. Has a role in meiosis. The polypeptide is Meiotically up-regulated gene 72 protein (mug72) (Schizosaccharomyces pombe (strain 972 / ATCC 24843) (Fission yeast)).